The sequence spans 287 residues: Pyridoxal kinase PdxY (287 aa).

Residues Ser10 and Thr45–Gln46 contribute to the substrate site. ATP contacts are provided by residues Asp112, Ala144, Glu149, Lys182, and Arg209–Val212. Position 224 (Asp224) interacts with substrate.

The protein belongs to the pyridoxine kinase family. PdxY subfamily. Homodimer. Mg(2+) is required as a cofactor.

It carries out the reaction pyridoxal + ATP = pyridoxal 5'-phosphate + ADP + H(+). It functions in the pathway cofactor metabolism; pyridoxal 5'-phosphate salvage; pyridoxal 5'-phosphate from pyridoxal: step 1/1. Its function is as follows. Pyridoxal kinase involved in the salvage pathway of pyridoxal 5'-phosphate (PLP). Catalyzes the phosphorylation of pyridoxal to PLP. This chain is Pyridoxal kinase PdxY, found in Shigella dysenteriae serotype 1 (strain Sd197).